The chain runs to 111 residues: uncharacterized protein (111 aa).

4 consecutive transmembrane segments (helical) span residues 3–23 (WVLVFIAGLLEVVWASSLKHA), 24–44 (DSLLDWIIIFILIAVSFILLI), 54–74 (AAYTVFVGIGTVGTYLTGIVL), and 80–100 (AAQMFFLALLLAGILGMKLFT).

Belongs to the drug/metabolite transporter (DMT) superfamily. Small multidrug resistance (SMR) (TC 2.A.7.1) family.

Its subcellular location is the cell membrane. This is an uncharacterized protein from Bacillus subtilis (strain 168).